The following is a 347-amino-acid chain: Gibberellin 3-beta-dioxygenase 2 (347 aa).

Residues 197–301 enclose the Fe2OG dioxygenase domain; sequence DFQGTQAVIQ…RFSMAYLWGP (105 aa). Fe cation contacts are provided by His-225, Asp-227, and His-282. Arg-292 is an active-site residue. 2-oxoglutarate is bound at residue Arg-292.

Belongs to the iron/ascorbate-dependent oxidoreductase family. GA3OX subfamily. L-ascorbate serves as cofactor. Fe(2+) is required as a cofactor. In terms of tissue distribution, highly expressed in seedlings but also expressed in roots, leaves, stems, flowers, siliques and seeds. Detected predominantly in the hypocotyl and roots of young seedlings and in the petioles and vasculature of leaves. Not expressed in the shoot apical meristem, but found in the elongation zone, the quiescent center cells and the columella cells of the root tips. Found in the cortex and the endodermis of the embryo axis in germinating seeds.

It catalyses the reaction gibberellin A20 + 2-oxoglutarate + O2 = gibberellin A1 + succinate + CO2. Its pathway is plant hormone biosynthesis; gibberellin biosynthesis. In terms of biological role, converts the inactive gibberellin (GA) precursors GA9 and GA20 in the bioactives gibberellins GA4 and GA1. Involved in the production of bioactive GA for vegetative growth and development. The sequence is that of Gibberellin 3-beta-dioxygenase 2 from Arabidopsis thaliana (Mouse-ear cress).